The chain runs to 348 residues: MGMSDVYLRSRTAMERLASSDTFPVIARSSACRSLFGPVDHEELGRELRMRLAELNAEDQNRWDFNFQQDVPLRGPGRLQWMEVDSESVPAFYRETVQVGRCRLQLGPRPPPVAVAVIPRSGPPAGEAPDGLEEAPEQPPSAPASAVVAEPTPPATPAPASDLTSDPIPEVTLVATSDPTPDPIPDANPDVATRDGEEQVPEQVSEQGEESGAEPGDELGTEPVSEQGEEQGAEPVEEKDEEPEEEQGAEPVEEQGAEPVEEQNGEPVEEQDENQEQRGQELKDQPLSGIPGRPAPGTAAANANDFFAKRKRTAQENKASNDVPPGCPSPNVAPGVGAVEQTPRKRLR.

R109 carries the post-translational modification Omega-N-methylarginine. Residues 115–348 (VAVIPRSGPP…VEQTPRKRLR (234 aa)) form a disordered region. Composition is skewed to acidic residues over residues 207 to 220 (QGEE…DELG) and 227 to 274 (QGEE…QDEN). Residues 275-284 (QEQRGQELKD) show a composition bias toward basic and acidic residues. Positions 309 to 312 (KRKR) match the Nuclear localization signal motif.

This sequence belongs to the CDI family. In terms of assembly, interacts with PCNA. As to expression, expressed in the heart, brain, lung, skeletal muscle, kidney, pancreas and testis. High levels are seen in the placenta while low levels are seen in the liver.

The protein localises to the nucleus. Potent tight-binding inhibitor of several G1 cyclin/CDK complexes (cyclin E-CDK2, cyclin D2-CDK4, and cyclin A-CDK2) and, to lesser extent, of the mitotic cyclin B-CDC2. Negative regulator of cell proliferation. May play a role in maintenance of the non-proliferative state throughout life. In Mus musculus (Mouse), this protein is Cyclin-dependent kinase inhibitor 1C (Cdkn1c).